The primary structure comprises 326 residues: ATP-dependent 6-phosphofructokinase 2 (326 aa).

Glycine 14 lines the ATP pocket. 24–28 is an ADP binding site; that stretch reads RAVTR. Residues 75-76 and 105-108 contribute to the ATP site; these read RC and GDGS. Aspartate 106 is a binding site for Mg(2+). 129–131 serves as a coordination point for substrate; it reads TID. Catalysis depends on aspartate 131, which acts as the Proton acceptor. Residue arginine 158 participates in ADP binding. Residues arginine 166 and 173-175 contribute to the substrate site; that span reads MGR. ADP contacts are provided by residues 189 to 191, lysine 215, and 217 to 219; these read GAE and KNS. Substrate contacts are provided by residues glutamate 226, arginine 250, and 256–259; that span reads HLQR.

Belongs to the phosphofructokinase type A (PFKA) family. ATP-dependent PFK group I subfamily. Prokaryotic clade 'B1' sub-subfamily. In terms of assembly, homotetramer. It depends on Mg(2+) as a cofactor.

The protein resides in the cytoplasm. It carries out the reaction beta-D-fructose 6-phosphate + ATP = beta-D-fructose 1,6-bisphosphate + ADP + H(+). The protein operates within carbohydrate degradation; glycolysis; D-glyceraldehyde 3-phosphate and glycerone phosphate from D-glucose: step 3/4. With respect to regulation, allosterically activated by ADP and other diphosphonucleosides, and allosterically inhibited by phosphoenolpyruvate. In terms of biological role, catalyzes the phosphorylation of D-fructose 6-phosphate to fructose 1,6-bisphosphate by ATP, the first committing step of glycolysis. This is ATP-dependent 6-phosphofructokinase 2 from Bacteroides thetaiotaomicron (strain ATCC 29148 / DSM 2079 / JCM 5827 / CCUG 10774 / NCTC 10582 / VPI-5482 / E50).